Reading from the N-terminus, the 234-residue chain is tRNA (guanine-N(1)-)-methyltransferase (234 aa).

Residues Gly110 and 134 to 139 (IGDYVL) each bind S-adenosyl-L-methionine.

It belongs to the RNA methyltransferase TrmD family. Homodimer.

Its subcellular location is the cytoplasm. It carries out the reaction guanosine(37) in tRNA + S-adenosyl-L-methionine = N(1)-methylguanosine(37) in tRNA + S-adenosyl-L-homocysteine + H(+). Its function is as follows. Specifically methylates guanosine-37 in various tRNAs. The polypeptide is tRNA (guanine-N(1)-)-methyltransferase (Tropheryma whipplei (strain TW08/27) (Whipple's bacillus)).